A 450-amino-acid chain; its full sequence is Biotin carboxylase 1 (450 aa).

A Biotin carboxylation domain is found at 1-447 (MIKKLLIANR…NTKFLETYDV (447 aa)). Residues lysine 116, lysine 158, 164 to 165 (GG), 200 to 203 (EKYI), and histidine 208 each bind ATP. The region spanning 120-318 (RETMKQAGVP…LIKEQIKVAS (199 aa)) is the ATP-grasp domain. Lysine 237 lines the hydrogencarbonate pocket. Positions 275 and 289 each coordinate ATP. Glutamate 275, glutamate 289, and asparagine 291 together coordinate Mg(2+). Mn(2+) contacts are provided by glutamate 275, glutamate 289, and asparagine 291. The hydrogencarbonate site is built by arginine 293, valine 296, and arginine 339. The active site involves arginine 293. Arginine 339 provides a ligand contact to biotin.

As to quaternary structure, acetyl-CoA carboxylase is a heterohexamer of biotin carboxyl carrier protein, biotin carboxylase and the two subunits of carboxyl transferase in a 2:2 complex. The cofactor is Mg(2+). It depends on Mn(2+) as a cofactor.

The enzyme catalyses N(6)-biotinyl-L-lysyl-[protein] + hydrogencarbonate + ATP = N(6)-carboxybiotinyl-L-lysyl-[protein] + ADP + phosphate + H(+). Its pathway is lipid metabolism; malonyl-CoA biosynthesis; malonyl-CoA from acetyl-CoA: step 1/1. Its function is as follows. This protein is a component of the acetyl coenzyme A carboxylase complex; first, biotin carboxylase catalyzes the carboxylation of the carrier protein and then the transcarboxylase transfers the carboxyl group to form malonyl-CoA. The protein is Biotin carboxylase 1 (accC1) of Bacillus subtilis (strain 168).